A 354-amino-acid polypeptide reads, in one-letter code: Protein RecA (354 aa).

Residue 78 to 85 (GPESSGKT) coordinates ATP.

It belongs to the RecA family.

The protein resides in the cytoplasm. Functionally, can catalyze the hydrolysis of ATP in the presence of single-stranded DNA, the ATP-dependent uptake of single-stranded DNA by duplex DNA, and the ATP-dependent hybridization of homologous single-stranded DNAs. It interacts with LexA causing its activation and leading to its autocatalytic cleavage. The polypeptide is Protein RecA (Zymomonas mobilis subsp. mobilis (strain ATCC 31821 / ZM4 / CP4)).